Consider the following 1994-residue polypeptide: Protein-methionine sulfoxide oxidase mical3a (1994 aa).

The segment at 2–498 is monooxygenase domain; sequence GDGGVNAVGE…RHLLDTGETR (497 aa). FAD is bound by residues cysteine 101, 101–129, glutamate 120, arginine 122, arginine 127, asparagine 129, and aspartate 402; that span reads CGLRTAIELGFLGAKVVLLEKRDAFSRNN. Residues 521–627 enclose the Calponin-homology (CH) domain; the sequence is IVRSSKLLNW…YLSQFYEMFK (107 aa). Residues 666–708 are disordered; that stretch reads ISRKRNPKDKKEKELDGLGKRRKTSQAGQSEDEELQRANRDDR. Residues 674–684 are compositionally biased toward basic and acidic residues; that stretch reads DKKEKELDGLG. The LIM zinc-binding domain occupies 772-834; it reads DVCFFCRKRV…KPHYCYRLSG (63 aa). Disordered stretches follow at residues 843–900, 917–1064, 1176–1263, 1281–1476, 1493–1555, and 1598–1747; these read PAAA…LKGT, EELE…AEAR, SQPV…ELKK, LGLT…REEV, VEDT…SPEA, and KVAW…LRLR. Composition is skewed to acidic residues over residues 917–926 and 951–961; these read EELEEVPEET and SDMEEEDEDAE. The segment covering 975–987 has biased composition (basic and acidic residues); it reads EAVELHAKLKGES. 2 stretches are compositionally biased toward acidic residues: residues 1001–1037 and 1046–1060; these read GEMDEDEEEEEDEEDEDEEEEEESSEEPCEEDDDPEA and PGTEIDQEDIPSDAE. The span at 1200-1215 shows a compositional bias: polar residues; the sequence is PTGNPLSPICTQSQPC. Composition is skewed to basic and acidic residues over residues 1249–1263 and 1287–1297; these read RTNEHLKDSTPELKK and ERSKTAVEKSI. 2 stretches are compositionally biased toward low complexity: residues 1299 to 1314 and 1358 to 1368; these read KTPTPESSSPKSYTPE and SSSSGLGLNGS. The span at 1369–1389 shows a compositional bias: polar residues; that stretch reads VTTSQTAASDSYNNSDSTMLT. Pro residues predominate over residues 1437–1458; that stretch reads PVSPPQPKQKPVTAPVPTPRTN. Residues 1464–1476 are compositionally biased toward basic and acidic residues; that stretch reads RVKEPNKPRREEV. Basic and acidic residues predominate over residues 1616–1635; that stretch reads AQKDSAVKALESKKQADTLP. The segment covering 1649–1660 has biased composition (low complexity); it reads SSVTSSESSTGG. Residues 1661 to 1679 are compositionally biased toward basic residues; that stretch reads KSKKRSSLFSPRKNKKEKK. Residues 1680–1693 are compositionally biased toward basic and acidic residues; it reads AKNERLSSTEETPP. The span at 1718–1729 shows a compositional bias: low complexity; the sequence is CPSTPSSSTTGD. The segment covering 1730-1746 has biased composition (basic and acidic residues); the sequence is SGKKKDSPLDRSSDLRL. Coiled coils occupy residues 1796–1855 and 1894–1960; these read EEEL…KALR and QEKN…EQRD. In terms of domain architecture, bMERB spans 1816 to 1982; it reads KQEELKRLHR…EKEEDKDLEA (167 aa).

The protein belongs to the Mical family. FAD serves as cofactor.

The protein localises to the cytoplasm. The protein resides in the cytoskeleton. It is found in the nucleus. The catalysed reaction is L-methionyl-[F-actin] + NADPH + O2 + H(+) = L-methionyl-(R)-S-oxide-[F-actin] + NADP(+) + H2O. In terms of biological role, monooxygenase that promotes depolymerization of F-actin by mediating oxidation of specific methionine residues on actin. Acts by modifying actin subunits through the addition of oxygen to form methionine-sulfoxide, leading to promote actin filament severing and prevent repolymerization. Involved in exocytic vesicles tethering and fusion: the monooxygenase activity is required for this process. The protein is Protein-methionine sulfoxide oxidase mical3a (mical3a) of Danio rerio (Zebrafish).